The following is a 59-amino-acid chain: Large ribosomal subunit protein bL32 (59 aa).

The interval 35–59 (EAHLRHHISPNGYYRGRKVVKTKND) is disordered. The span at 49–59 (RGRKVVKTKND) shows a compositional bias: basic residues.

This sequence belongs to the bacterial ribosomal protein bL32 family.

The chain is Large ribosomal subunit protein bL32 from Polynucleobacter asymbioticus (strain DSM 18221 / CIP 109841 / QLW-P1DMWA-1) (Polynucleobacter necessarius subsp. asymbioticus).